A 177-amino-acid chain; its full sequence is ATP synthase subunit delta (177 aa).

It belongs to the ATPase delta chain family. As to quaternary structure, F-type ATPases have 2 components, F(1) - the catalytic core - and F(0) - the membrane proton channel. F(1) has five subunits: alpha(3), beta(3), gamma(1), delta(1), epsilon(1). F(0) has three main subunits: a(1), b(2) and c(10-14). The alpha and beta chains form an alternating ring which encloses part of the gamma chain. F(1) is attached to F(0) by a central stalk formed by the gamma and epsilon chains, while a peripheral stalk is formed by the delta and b chains.

The protein resides in the cell inner membrane. Functionally, f(1)F(0) ATP synthase produces ATP from ADP in the presence of a proton or sodium gradient. F-type ATPases consist of two structural domains, F(1) containing the extramembraneous catalytic core and F(0) containing the membrane proton channel, linked together by a central stalk and a peripheral stalk. During catalysis, ATP synthesis in the catalytic domain of F(1) is coupled via a rotary mechanism of the central stalk subunits to proton translocation. This protein is part of the stalk that links CF(0) to CF(1). It either transmits conformational changes from CF(0) to CF(1) or is implicated in proton conduction. The polypeptide is ATP synthase subunit delta (Citrobacter koseri (strain ATCC BAA-895 / CDC 4225-83 / SGSC4696)).